The chain runs to 353 residues: S-adenosylmethionine:tRNA ribosyltransferase-isomerase (353 aa).

This sequence belongs to the QueA family. As to quaternary structure, monomer.

The protein localises to the cytoplasm. The enzyme catalyses 7-aminomethyl-7-carbaguanosine(34) in tRNA + S-adenosyl-L-methionine = epoxyqueuosine(34) in tRNA + adenine + L-methionine + 2 H(+). It participates in tRNA modification; tRNA-queuosine biosynthesis. Its function is as follows. Transfers and isomerizes the ribose moiety from AdoMet to the 7-aminomethyl group of 7-deazaguanine (preQ1-tRNA) to give epoxyqueuosine (oQ-tRNA). The sequence is that of S-adenosylmethionine:tRNA ribosyltransferase-isomerase from Blochmanniella floridana.